The chain runs to 359 residues: MKPSMRAKLDHLDTRLAELNSLLTSEEATKDMDAYRKLTREHSDIATVVEQFGLYKKAEADAQAAEEMRKDPEMKDFADEEQKQAQATMEELEGALQKLLLPKDVNDERNVFLEIRAGTGGDESALFAGDLLRMYTRFAERQGWKVEVVNAAESDLGGYKEVVLRLVGQSVYSRLKFESGGHRVQRVPQTETQGRIHTSACTVAVMPEADELEAVKINPAELRIDTFRASGAGGQHINKTDSAVRITHIPTGTVVECQDDRSQHRNREQAMKVLVSRIMDAREREKHQLEAQTRKSLIGSGDRSDRIRTYNFPQGRITDHRINLTLYKIDAMMDGDIDDLCNALASEHQAELLAALGDS.

Gln-235 is modified (N5-methylglutamine).

The protein belongs to the prokaryotic/mitochondrial release factor family. Post-translationally, methylated by PrmC. Methylation increases the termination efficiency of RF1.

The protein resides in the cytoplasm. Functionally, peptide chain release factor 1 directs the termination of translation in response to the peptide chain termination codons UAG and UAA. This is Peptide chain release factor 1 from Polynucleobacter asymbioticus (strain DSM 18221 / CIP 109841 / QLW-P1DMWA-1) (Polynucleobacter necessarius subsp. asymbioticus).